Here is a 510-residue protein sequence, read N- to C-terminus: MKSKLICIIMVIAFQAHFTMTVKADSVGEEKLQNNTQAKKTPADLKALPDSCEAKDFYKNFKILDMTKDKLGVTHYTLALSSGGYLTDNDEIKVHVTPDNKITFINGDLQQGQLRITNQIKITEKNAIEKAFEAIGQSEAHVKSYVGNPVKEKEIILNSRTKRLVYNIKLIFAEPEVASWIVQVDVETGAILKKQNMLSEVERADTHKDFQALGKGANRLLQRPLHVMKINDLFYLVDRTHKGLIRTFDLKHNTDTSFGKVVSNKTNMFTDPEFSSAVDAHFYASEVYEYYKNVHQLESLDGKGGEIDSFVHYGLNCNNAFWDGQEILYGDGDKKNFKPFSCAKTIVGHELTHAVIQYSAGLEYEGQSGALNESFADVFGYFIAPNHWLIGEDVCVRGSRDGRIRSIKDPDKYNQAAHMKDYESLPLTEEGDWGGVHYNSGIPNKAAYNTITKLGKEKTEQLYFRALKYYLTKKSQFTDAKKALQQAAKDLYGEDASKKVAEAWEAVGVN.

The signal sequence occupies residues 1 to 24; that stretch reads MKSKLICIIMVIAFQAHFTMTVKA. A propeptide spanning residues 25–200 is cleaved from the precursor; that stretch reads DSVGEEKLQN…ILKKQNMLSE (176 aa). Histidine 349 provides a ligand contact to Zn(2+). The active site involves glutamate 350. Histidine 353 and glutamate 373 together coordinate Zn(2+). Catalysis depends on histidine 437, which acts as the Proton donor.

This sequence belongs to the peptidase M4 family. The cofactor is Zn(2+).

The protein localises to the secreted. Its function is as follows. Probably linked to the pathogenesis of listerial infection. In Listeria monocytogenes serovar 1/2a (strain ATCC BAA-679 / EGD-e), this protein is Zinc metalloproteinase (mpl).